A 758-amino-acid chain; its full sequence is 5-methyltetrahydropteroyltriglutamate--homocysteine methyltransferase (758 aa).

5-methyltetrahydropteroyltri-L-glutamate-binding positions include R17 to K20 and K117. L-homocysteine-binding positions include I434–S436 and E487. L-methionine contacts are provided by residues I434 to S436 and E487. 5-methyltetrahydropteroyltri-L-glutamate is bound by residues R518–C519 and W564. Residue D602 coordinates L-homocysteine. Residue D602 coordinates L-methionine. 5-methyltetrahydropteroyltri-L-glutamate is bound at residue E608. H644, C646, and E668 together coordinate Zn(2+). The active-site Proton donor is H697. C729 is a binding site for Zn(2+).

This sequence belongs to the vitamin-B12 independent methionine synthase family. The cofactor is Zn(2+).

It catalyses the reaction 5-methyltetrahydropteroyltri-L-glutamate + L-homocysteine = tetrahydropteroyltri-L-glutamate + L-methionine. It functions in the pathway amino-acid biosynthesis; L-methionine biosynthesis via de novo pathway; L-methionine from L-homocysteine (MetE route): step 1/1. Catalyzes the transfer of a methyl group from 5-methyltetrahydrofolate to homocysteine resulting in methionine formation. This is 5-methyltetrahydropteroyltriglutamate--homocysteine methyltransferase from Yersinia pseudotuberculosis serotype I (strain IP32953).